A 211-amino-acid polypeptide reads, in one-letter code: MGLVFLGPPGSGKGTISKIISNEFKYHHISTGDLFRENILNSTTLGKEIKKIVEKGELVPDQITIKIVKDKIKAIKKNDNFILDGFPRNICQAEALDKFLPNVKIINFLINEELVIKRLSGRRICKSCNNIFNIYTLATKKNGICDVCKGDLYQREDDKEECLKTRLKEYKLQTKPLIEFYSKCSRLNNVDASVEIDEIKKKIIKIMLKKN.

10-15 (GSGKGT) provides a ligand contact to ATP. Positions 30–59 (STGDLFRENILNSTTLGKEIKKIVEKGELV) are NMP. AMP-binding positions include threonine 31, arginine 36, 57–59 (ELV), 85–88 (GFPR), and glutamine 92. Residues 121 to 158 (GRRICKSCNNIFNIYTLATKKNGICDVCKGDLYQREDD) are LID. Position 122 (arginine 122) interacts with ATP. 2 residues coordinate Zn(2+): cysteine 125 and cysteine 128. 131–132 (IF) is an ATP binding site. Positions 145 and 148 each coordinate Zn(2+). Arginine 155 and arginine 166 together coordinate AMP. An ATP-binding site is contributed by valine 194.

The protein belongs to the adenylate kinase family. Monomer.

Its subcellular location is the cytoplasm. The catalysed reaction is AMP + ATP = 2 ADP. It participates in purine metabolism; AMP biosynthesis via salvage pathway; AMP from ADP: step 1/1. Catalyzes the reversible transfer of the terminal phosphate group between ATP and AMP. Plays an important role in cellular energy homeostasis and in adenine nucleotide metabolism. The protein is Adenylate kinase of Borrelia garinii subsp. bavariensis (strain ATCC BAA-2496 / DSM 23469 / PBi) (Borreliella bavariensis).